A 185-amino-acid polypeptide reads, in one-letter code: Large ribosomal subunit protein uL22 (185 aa).

The segment at 157 to 185 is disordered; it reads VAAPSPEEDAPKKKQSKKKMARQKLMQRD. Over residues 169–178 the composition is skewed to basic residues; sequence KKQSKKKMAR.

It belongs to the universal ribosomal protein uL22 family.

In Ixodes scapularis (Black-legged tick), this protein is Large ribosomal subunit protein uL22 (RpL17).